The primary structure comprises 435 residues: 5'-deoxyadenosine deaminase (435 aa).

Residues histidine 64 and histidine 66 each coordinate Zn(2+). Glutamate 93 and histidine 185 together coordinate substrate. Histidine 212 contributes to the Zn(2+) binding site. 2 residues coordinate substrate: glutamate 215 and aspartate 300. A Zn(2+)-binding site is contributed by aspartate 300.

This sequence belongs to the metallo-dependent hydrolases superfamily. MTA/SAH deaminase family. Homotetramer. Requires Zn(2+) as cofactor.

It catalyses the reaction 5'-deoxyadenosine + H2O + H(+) = 5'-deoxyinosine + NH4(+). The enzyme catalyses S-adenosyl-L-homocysteine + H2O + H(+) = S-inosyl-L-homocysteine + NH4(+). It carries out the reaction S-methyl-5'-thioadenosine + H2O + H(+) = S-methyl-5'-thioinosine + NH4(+). The catalysed reaction is adenosine + H2O + H(+) = inosine + NH4(+). It participates in amino-acid biosynthesis; S-adenosyl-L-methionine biosynthesis. In terms of biological role, catalyzes the deamination of three SAM-derived enzymatic products, namely 5'-deoxyadenosine, S-adenosyl-L-homocysteine, and 5'-methylthioadenosine, to produce the inosine analogs. Can also deaminate adenosine. The preferred substrate for this enzyme is 5'-deoxyadenosine, but all these substrates are efficiently deaminated. Likely functions in a S-adenosyl-L-methionine (SAM) recycling pathway from S-adenosyl-L-homocysteine (SAH) produced from SAM-dependent methylation reactions. May also be involved in the recycling of 5'-deoxyadenosine, whereupon the 5'-deoxyribose moiety of 5'-deoxyinosine is further metabolized to deoxyhexoses used for the biosynthesis of aromatic amino acids in methanogens. The chain is 5'-deoxyadenosine deaminase from Methanobrevibacter smithii (strain ATCC 35061 / DSM 861 / OCM 144 / PS).